The following is a 374-amino-acid chain: Dual-specificity RNA methyltransferase RlmN (374 aa).

Residue Glu94 is the Proton acceptor of the active site. Residues 100–339 (EEDRATLCVS…VTIRKTRGDD (240 aa)) enclose the Radical SAM core domain. Cysteines 107 and 344 form a disulfide. 3 residues coordinate [4Fe-4S] cluster: Cys114, Cys118, and Cys121. Residues 168-169 (GE), Ser200, 222-224 (SLH), and Asn301 each bind S-adenosyl-L-methionine. Cys344 (S-methylcysteine intermediate) is an active-site residue.

The protein belongs to the radical SAM superfamily. RlmN family. The cofactor is [4Fe-4S] cluster.

It is found in the cytoplasm. It carries out the reaction adenosine(2503) in 23S rRNA + 2 reduced [2Fe-2S]-[ferredoxin] + 2 S-adenosyl-L-methionine = 2-methyladenosine(2503) in 23S rRNA + 5'-deoxyadenosine + L-methionine + 2 oxidized [2Fe-2S]-[ferredoxin] + S-adenosyl-L-homocysteine. The enzyme catalyses adenosine(37) in tRNA + 2 reduced [2Fe-2S]-[ferredoxin] + 2 S-adenosyl-L-methionine = 2-methyladenosine(37) in tRNA + 5'-deoxyadenosine + L-methionine + 2 oxidized [2Fe-2S]-[ferredoxin] + S-adenosyl-L-homocysteine. In terms of biological role, specifically methylates position 2 of adenine 2503 in 23S rRNA and position 2 of adenine 37 in tRNAs. m2A2503 modification seems to play a crucial role in the proofreading step occurring at the peptidyl transferase center and thus would serve to optimize ribosomal fidelity. The polypeptide is Dual-specificity RNA methyltransferase RlmN (Vibrio vulnificus (strain YJ016)).